A 250-amino-acid polypeptide reads, in one-letter code: tRNA-specific adenosine deaminase subunit TAD2 (250 aa).

Residues 1–119 enclose the CMP/dCMP-type deaminase domain; the sequence is MQHIKHMRTA…ERFGGNGTVL (119 aa). Position 54 (His54) interacts with Zn(2+). The Proton donor role is filled by Glu56. Zn(2+)-binding residues include Cys88 and Cys91.

This sequence belongs to the cytidine and deoxycytidylate deaminase family. ADAT2 subfamily. As to quaternary structure, heterodimer with TAD3. The cofactor is Zn(2+).

Its subcellular location is the cytoplasm. It is found in the nucleus. The enzyme catalyses adenosine(34) in tRNA + H2O + H(+) = inosine(34) in tRNA + NH4(+). Structural subunit of tRNA-specific adenosine deaminase, which deaminates adenosine-34 (the first, also called wobble position of the anticodon) to inosine in many tRNAs. Inosine-34 allows the decoding of 3 different nucleotides at the third position of mRNA codons, as inosine is able to pair with U, C, and A. This Saccharomyces cerevisiae (strain ATCC 204508 / S288c) (Baker's yeast) protein is tRNA-specific adenosine deaminase subunit TAD2 (TAD2).